The following is a 216-amino-acid chain: ATP phosphoribosyltransferase (216 aa).

The protein belongs to the ATP phosphoribosyltransferase family. Short subfamily. Heteromultimer composed of HisG and HisZ subunits.

It localises to the cytoplasm. It catalyses the reaction 1-(5-phospho-beta-D-ribosyl)-ATP + diphosphate = 5-phospho-alpha-D-ribose 1-diphosphate + ATP. It functions in the pathway amino-acid biosynthesis; L-histidine biosynthesis; L-histidine from 5-phospho-alpha-D-ribose 1-diphosphate: step 1/9. Functionally, catalyzes the condensation of ATP and 5-phosphoribose 1-diphosphate to form N'-(5'-phosphoribosyl)-ATP (PR-ATP). Has a crucial role in the pathway because the rate of histidine biosynthesis seems to be controlled primarily by regulation of HisG enzymatic activity. The polypeptide is ATP phosphoribosyltransferase (Nitrosomonas europaea (strain ATCC 19718 / CIP 103999 / KCTC 2705 / NBRC 14298)).